The sequence spans 41 residues: Pi-stichotoxin-Hcr5a (41 aa).

3 cysteine pairs are disulfide-bonded: Cys-4–Cys-37, Cys-6–Cys-30, and Cys-20–Cys-38.

This sequence belongs to the sea anemone type 3 (BDS) potassium channel toxin family.

The protein localises to the secreted. It localises to the nematocyst. Functionally, weakly inhibits human homomeric ASIC3 (IC(50)=5.5 uM). This chain is Pi-stichotoxin-Hcr5a, found in Radianthus crispa (Leathery sea anemone).